The chain runs to 434 residues: Trigger factor (434 aa).

In terms of domain architecture, PPIase FKBP-type spans 162–247 (GDKINISLIA…FNTVEQAKLP (86 aa)).

It belongs to the FKBP-type PPIase family. Tig subfamily.

It is found in the cytoplasm. The enzyme catalyses [protein]-peptidylproline (omega=180) = [protein]-peptidylproline (omega=0). In terms of biological role, involved in protein export. Acts as a chaperone by maintaining the newly synthesized protein in an open conformation. Functions as a peptidyl-prolyl cis-trans isomerase. This chain is Trigger factor, found in Methylobacillus flagellatus (strain ATCC 51484 / DSM 6875 / VKM B-1610 / KT).